A 127-amino-acid chain; its full sequence is Class I hydrophobin 1 (127 aa).

The N-terminal stretch at 1 to 20 (MLSLLSKAVSLAILVTAVVA) is a signal peptide. Disulfide bonds link Cys-53–Cys-108, Cys-60–Cys-102, Cys-61–Cys-94, and Cys-109–Cys-122. A glycan (N-linked (GlcNAc...) asparagine) is linked at Asn-66.

This sequence belongs to the fungal hydrophobin family. In terms of assembly, self-assembles to form functional amyloid fibrils called rodlets. Self-assembly into fibrillar rodlets occurs spontaneously at hydrophobic:hydrophilic interfaces and the rodlets further associate laterally to form amphipathic monolayers. In terms of tissue distribution, expressed everywhere in the mycelial tissues of developing fruiting bodies except for the top parts of the pileus (cap) and for the prehymenophore; but high level of the transcript is detected in the parts surrounding the prehymenophore.

The protein resides in the secreted. It is found in the cell wall. Functionally, aerial growth, conidiation, and dispersal of filamentous fungi in the environment rely upon a capability of their secreting small amphipathic proteins called hydrophobins (HPBs) with low sequence identity. Class I can self-assemble into an outermost layer of rodlet bundles on aerial cell surfaces, conferring cellular hydrophobicity that supports fungal growth, development and dispersal; whereas Class II form highly ordered films at water-air interfaces through intermolecular interactions but contribute nothing to the rodlet structure. Hyd1 is a class I hydrophobin that plays a role in fruiting body initiation rather than in mature fruit body maintenance. Seems to be involved in the formation in the extracellular matrix of lined air channels with a hydrophobic membrane. These channels may help to provide gas exchange during respiration in mycelial tissues of developing fruiting bodies and are formed all over the mycelial tissues of these developing fruiting bodies except for the top parts of the pileus (cap) and for the prehymenophore. In Lentinula edodes (Shiitake mushroom), this protein is Class I hydrophobin 1.